Reading from the N-terminus, the 442-residue chain is Dol-P-Man:Man(5)GlcNAc(2)-PP-Dol alpha-1,3-mannosyltransferase (442 aa).

Over 1–34 (MAAPSSRPESNPPLYKQALDFALDVANGRHALSK) the chain is Lumenal. A helical membrane pass occupies residues 35–55 (LIPPALFLVDALLCGLIIWKV). The Cytoplasmic segment spans residues 56–84 (PYTEIDWAAYMEQVSQILSGERDYTKVRG). A helical membrane pass occupies residues 85-105 (GTGPLVYPAAHVYIYTGLYHL). Over 106 to 111 (TDEGRN) the chain is Lumenal. A helical transmembrane segment spans residues 112 to 132 (ILLAQQLFAGLYMVTLAVVMG). The Cytoplasmic portion of the chain corresponds to 133 to 155 (CYWQAKAPPYLFPLLTLSKRLHS). Residues 156–176 (IFVLRCFNDCFAVLFLWLAIF) traverse the membrane as a helical segment. Residues 177–198 (FFQRRNWQAGALLYTLGLGVKM) lie on the Lumenal side of the membrane. Residues 199–219 (TLLLSLPAVGIVLFLGSGSFV) form a helical membrane-spanning segment. Position 220 (T220) is a topological domain, cytoplasmic. The helical transmembrane segment at 221–241 (TLQLVATMGLVQILIGVPFLA) threads the bilayer. Residues 242-272 (HYPTEYLSRAFELSRQFFFKWTVNWRFVGEE) lie on the Lumenal side of the membrane. Residues 273-293 (IFLSKGFALTLLALHVLVLGI) traverse the membrane as a helical segment. Residues 294–333 (FITTRWIKPARKSLVQLISPVLLAGKPPLTVPEHRAAARD) lie on the Cytoplasmic side of the membrane. A helical membrane pass occupies residues 334 to 354 (VTPRYIMTTILSANAVGLLFA). Residues 355 to 376 (RSLHYQFYAYVAWSTPFLLWRA) lie on the Lumenal side of the membrane. The chain crosses the membrane as a helical span at residues 377–397 (GLHPVLVYLLWAVHEWAWNVF). The Cytoplasmic segment spans residues 398–401 (PSTP). The helical transmembrane segment at 402 to 422 (ASSAVVVGVLGVTVAGVWFGA) threads the bilayer. Residues 423–442 (REEWEPGMKSSSKKEEAAMR) lie on the Lumenal side of the membrane.

Belongs to the glycosyltransferase ALG3 family.

Its subcellular location is the endoplasmic reticulum membrane. It carries out the reaction an alpha-D-Man-(1-&gt;2)-alpha-D-Man-(1-&gt;2)-alpha-D-Man-(1-&gt;3)-[alpha-D-Man-(1-&gt;6)]-beta-D-Man-(1-&gt;4)-beta-D-GlcNAc-(1-&gt;4)-alpha-D-GlcNAc-diphospho-di-trans,poly-cis-dolichol + a di-trans,poly-cis-dolichyl beta-D-mannosyl phosphate = an alpha-D-Man-(1-&gt;2)-alpha-D-Man-(1-&gt;2)-alpha-D-Man-(1-&gt;3)-[alpha-D-Man-(1-&gt;3)-alpha-D-Man-(1-&gt;6)]-beta-D-Man-(1-&gt;4)-beta-D-GlcNAc-(1-&gt;4)-alpha-D-GlcNAc-diphospho-di-trans,poly-cis-dolichol + a di-trans,poly-cis-dolichyl phosphate + H(+). It participates in protein modification; protein glycosylation. Dol-P-Man:Man(5)GlcNAc(2)-PP-Dol alpha-1,3-mannosyltransferase that operates in the biosynthetic pathway of dolichol-linked oligosaccharides, the glycan precursors employed in protein asparagine (N)-glycosylation. The assembly of dolichol-linked oligosaccharides begins on the cytosolic side of the endoplasmic reticulum membrane and finishes in its lumen. The sequential addition of sugars to dolichol pyrophosphate produces dolichol-linked oligosaccharides containing fourteen sugars, including two GlcNAcs, nine mannoses and three glucoses. Once assembled, the oligosaccharide is transferred from the lipid to nascent proteins by oligosaccharyltransferases. In the lumen of the endoplasmic reticulum, adds the first dolichyl beta-D-mannosyl phosphate derived mannose in an alpha-1,3 linkage to Man(5)GlcNAc(2)-PP-dolichol to produce Man(6)GlcNAc(2)-PP-dolichol. This Neurospora crassa (strain ATCC 24698 / 74-OR23-1A / CBS 708.71 / DSM 1257 / FGSC 987) protein is Dol-P-Man:Man(5)GlcNAc(2)-PP-Dol alpha-1,3-mannosyltransferase (alg-3).